We begin with the raw amino-acid sequence, 577 residues long: Protein CBFA2T1 (577 aa).

Residues 1–10 show a composition bias toward basic and acidic residues; that stretch reads MPDRTEKHST. The tract at residues 1–87 is disordered; the sequence is MPDRTEKHST…SSSSLANQQL (87 aa). S14 is modified (phosphoserine). Residues 42–59 are compositionally biased toward polar residues; sequence SSFTPTTLTNGTSHSPTA. Residues 68–87 show a composition bias toward low complexity; sequence NGFSNGPSSSSSSSLANQQL. Residues 93-188 form the TAFH domain; that stretch reads ARQLSKLKRF…NPAQYLAQHE (96 aa). Residues 203 to 271 form a disordered region; it reads SELLLDVNEN…LPHPTPPPPQ (69 aa). Residues 211-237 are compositionally biased toward basic and acidic residues; that stretch reads ENGKRRTPDRTKENGFDREPLHSEHPS. Polar residues predominate over residues 244–258; the sequence is SPGQRYSPNNGLSYQ. Residues 262–271 are compositionally biased toward pro residues; that stretch reads LPHPTPPPPQ. The segment at 310–356 is important for oligomerization; it reads QEEMIDHRLTDREWAEEWKHLDHLLNCIMDMVEKTRRSLTVLRRCQE. Residues 310–356 form a nervy homology region 2 (NHR2) region; sequence QEEMIDHRLTDREWAEEWKHLDHLLNCIMDMVEKTRRSLTVLRRCQE. The disordered stretch occupies residues 374-396; the sequence is DLKKGGSSSSSHSRQQSPVNPDP. The segment covering 380 to 390 has biased composition (low complexity); it reads SSSSSHSRQQS. Position 390 is a phosphoserine (S390). Positions 416-465 are nervy homology region 3 (NHR3); sequence EEIWKKAEEAVNEVKRQAMTELQKAVSEAERKAHDMITTERAKMERTVAE. Zn(2+) is bound by residues C488, C491, C499, C502, C508, C512, H520, and C524. An MYND-type zinc finger spans residues 488-524; the sequence is CWNCGRKASETCSGCNTARYCGSFCQHKDWEKHHHIC. The segment at 529–577 is disordered; that stretch reads QAPQQGDTPAVSSSVTPSSGAGSPMDTPPAATPRSTTPGTPSTIETTPR. Low complexity-rich tracts occupy residues 536–553 and 560–577; these read TPAVSSSVTPSSGAGSPM and TPRSTTPGTPSTIETTPR.

Belongs to the CBFA2T family. Homotetramer. Heterotetramer with CBFA2T2 and CBFA2T3. Interacts with TCF12, SIN3A, HDAC1, HDAC2, HDAC3, NCOR1 and NCOR2. Interacts with ATN1 (via its N-terminus); the interaction enhances the transcriptional repression.

It localises to the nucleus. Transcriptional corepressor which facilitates transcriptional repression via its association with DNA-binding transcription factors and recruitment of other corepressors and histone-modifying enzymes. Can repress the expression of MMP7 in a ZBTB33-dependent manner. Can repress transactivation mediated by TCF12. Acts as a negative regulator of adipogenesis. This is Protein CBFA2T1 (Runx1t1) from Mus musculus (Mouse).